Consider the following 239-residue polypeptide: Small ribosomal subunit protein uS3 (239 aa).

The region spanning 39 to 107 (VRQVLRKKMS…PVHINVIEVR (69 aa)) is the KH type-2 domain. The interval 214-239 (SQEKQDDGSRGDRNADRSSRRSREVR) is disordered. Positions 216 to 239 (EKQDDGSRGDRNADRSSRRSREVR) are enriched in basic and acidic residues.

It belongs to the universal ribosomal protein uS3 family. In terms of assembly, part of the 30S ribosomal subunit. Forms a tight complex with proteins S10 and S14.

Binds the lower part of the 30S subunit head. Binds mRNA in the 70S ribosome, positioning it for translation. The protein is Small ribosomal subunit protein uS3 of Xylella fastidiosa (strain M23).